The sequence spans 293 residues: Ethanolamine ammonia-lyase small subunit (293 aa).

Positions 207 and 228 each coordinate adenosylcob(III)alamin.

The protein belongs to the EutC family. The basic unit is a heterodimer which dimerizes to form tetramers. The heterotetramers trimerize; 6 large subunits form a core ring with 6 small subunits projecting outwards. The cofactor is adenosylcob(III)alamin.

Its subcellular location is the bacterial microcompartment. The catalysed reaction is ethanolamine = acetaldehyde + NH4(+). The protein operates within amine and polyamine degradation; ethanolamine degradation. Functionally, catalyzes the deamination of various vicinal amino-alcohols to oxo compounds. Allows this organism to utilize ethanolamine as the sole source of nitrogen and carbon in the presence of external vitamin B12. The polypeptide is Ethanolamine ammonia-lyase small subunit (Listeria monocytogenes serovar 1/2a (strain ATCC BAA-679 / EGD-e)).